The primary structure comprises 450 residues: Probable ECA polymerase (450 aa).

11 consecutive transmembrane segments (helical) span residues 6-26 (FSGL…LTWF), 37-57 (VFFS…TSVL), 63-83 (VGVA…CFYA), 118-138 (VILM…NGFL), 155-175 (GVAL…VYFL), 181-201 (AWLF…MIVG), 207-227 (IIIA…ISLW), 228-248 (MLAA…LKRY), 341-361 (LVVM…GLII), 378-398 (YKAA…IVLA), and 410-430 (VFFI…YWLF).

The protein belongs to the WzyE family. As to quaternary structure, probably part of a complex composed of WzxE, WzyE and WzzE.

The protein localises to the cell inner membrane. The protein operates within bacterial outer membrane biogenesis; enterobacterial common antigen biosynthesis. In terms of biological role, probably involved in the polymerization of enterobacterial common antigen (ECA) trisaccharide repeat units. This Escherichia coli O127:H6 (strain E2348/69 / EPEC) protein is Probable ECA polymerase.